A 281-amino-acid chain; its full sequence is Probable ABC transporter ATP-binding protein AZC_3926 (281 aa).

The interval 1–38 (MNVLSMFGRNATRETSSPAATAGRYADEGDWEGDDHQP) is disordered. The 233-residue stretch at 45 to 277 (LAAFGLAKSY…PDVRRLYLGE (233 aa)) folds into the ABC transporter domain. 77–84 (GPNGAGKT) serves as a coordination point for ATP.

Belongs to the ABC transporter superfamily.

This Azorhizobium caulinodans (strain ATCC 43989 / DSM 5975 / JCM 20966 / LMG 6465 / NBRC 14845 / NCIMB 13405 / ORS 571) protein is Probable ABC transporter ATP-binding protein AZC_3926.